We begin with the raw amino-acid sequence, 134 residues long: uncharacterized protein (134 aa).

This is an uncharacterized protein from Methanocaldococcus jannaschii (strain ATCC 43067 / DSM 2661 / JAL-1 / JCM 10045 / NBRC 100440) (Methanococcus jannaschii).